The sequence spans 181 residues: Shikimate kinase (181 aa).

Residue 17–22 (GAGKTT) coordinates ATP. Residue Thr21 coordinates Mg(2+). 3 residues coordinate substrate: Asp39, Arg63, and Gly85. Position 122 (Arg122) interacts with ATP. Residue Arg141 coordinates substrate.

This sequence belongs to the shikimate kinase family. As to quaternary structure, monomer. Mg(2+) is required as a cofactor.

It localises to the cytoplasm. The enzyme catalyses shikimate + ATP = 3-phosphoshikimate + ADP + H(+). The protein operates within metabolic intermediate biosynthesis; chorismate biosynthesis; chorismate from D-erythrose 4-phosphate and phosphoenolpyruvate: step 5/7. Catalyzes the specific phosphorylation of the 3-hydroxyl group of shikimic acid using ATP as a cosubstrate. This chain is Shikimate kinase, found in Trichormus variabilis (strain ATCC 29413 / PCC 7937) (Anabaena variabilis).